The sequence spans 348 residues: Methylthioribose-1-phosphate isomerase (348 aa).

Substrate is bound by residues 47 to 49, arginine 90, and glutamine 196; that span reads RGA. Aspartate 237 acts as the Proton donor in catalysis. 247 to 248 serves as a coordination point for substrate; the sequence is NK.

Belongs to the eIF-2B alpha/beta/delta subunits family. MtnA subfamily.

The enzyme catalyses 5-(methylsulfanyl)-alpha-D-ribose 1-phosphate = 5-(methylsulfanyl)-D-ribulose 1-phosphate. Its pathway is amino-acid biosynthesis; L-methionine biosynthesis via salvage pathway; L-methionine from S-methyl-5-thio-alpha-D-ribose 1-phosphate: step 1/6. Its function is as follows. Catalyzes the interconversion of methylthioribose-1-phosphate (MTR-1-P) into methylthioribulose-1-phosphate (MTRu-1-P). The sequence is that of Methylthioribose-1-phosphate isomerase from Synechococcus sp. (strain ATCC 27144 / PCC 6301 / SAUG 1402/1) (Anacystis nidulans).